A 364-amino-acid polypeptide reads, in one-letter code: Phosphoserine aminotransferase (364 aa).

Arg-41 contributes to the L-glutamate binding site. Pyridoxal 5'-phosphate-binding positions include Ala-75 to Ser-76, Trp-100, Thr-155, and Gln-198. Lys-199 is subject to N6-(pyridoxal phosphate)lysine. Asn-239–Thr-240 is a binding site for pyridoxal 5'-phosphate.

It belongs to the class-V pyridoxal-phosphate-dependent aminotransferase family. SerC subfamily. As to quaternary structure, homodimer. Pyridoxal 5'-phosphate serves as cofactor.

The protein localises to the cytoplasm. It carries out the reaction O-phospho-L-serine + 2-oxoglutarate = 3-phosphooxypyruvate + L-glutamate. The enzyme catalyses 4-(phosphooxy)-L-threonine + 2-oxoglutarate = (R)-3-hydroxy-2-oxo-4-phosphooxybutanoate + L-glutamate. It participates in amino-acid biosynthesis; L-serine biosynthesis; L-serine from 3-phospho-D-glycerate: step 2/3. Catalyzes the reversible conversion of 3-phosphohydroxypyruvate to phosphoserine and of 3-hydroxy-2-oxo-4-phosphonooxybutanoate to phosphohydroxythreonine. This chain is Phosphoserine aminotransferase, found in Streptococcus thermophilus (strain ATCC BAA-250 / LMG 18311).